The following is a 141-amino-acid chain: Hemoglobin subunit alpha-3 (141 aa).

The 141-residue stretch at 1–141 folds into the Globin domain; the sequence is VLSPADKTNV…VSTVLTSKYR (141 aa). H58 contacts O2. H87 provides a ligand contact to heme b.

It belongs to the globin family. In terms of assembly, heterotetramer of two alpha chains and two beta chains. Red blood cells.

Functionally, involved in oxygen transport from the lung to the various peripheral tissues. The polypeptide is Hemoglobin subunit alpha-3 (Gorilla gorilla gorilla (Western lowland gorilla)).